Consider the following 221-residue polypeptide: Germin-like protein subfamily 1 member 19 (221 aa).

Residues 1 to 21 (MKVSMSLILITLSALVTIAKA) form the signal peptide. Cys-31 and Cys-48 are oxidised to a cystine. In terms of domain architecture, Cupin type-1 spans 76–213 (SNVTTVNVDQ…AFQLDVNVVK (138 aa)). The N-linked (GlcNAc...) asparagine glycan is linked to Asn-77. Mn(2+)-binding residues include His-110, His-112, Glu-117, and His-159.

The protein belongs to the germin family. Oligomer (believed to be a pentamer but probably hexamer).

It localises to the secreted. Its subcellular location is the extracellular space. The protein resides in the apoplast. Its function is as follows. May play a role in plant defense. Probably has no oxalate oxidase activity even if the active site is conserved. This Arabidopsis thaliana (Mouse-ear cress) protein is Germin-like protein subfamily 1 member 19.